Reading from the N-terminus, the 94-residue chain is Enhancer of yellow 2 transcription factor (94 aa).

It belongs to the ENY2 family. In terms of assembly, component of the nuclear pore complex (NPC)-associated AMEX complex (anchoring and mRNA export complex), composed of at least e(y)2 and xmas-2. Component of the SAGA transcription coactivator-HAT complexes, at least composed of Ada2b, e(y)2, Pcaf/Gcn5, Taf10 and Nipped-A/Trrap. Within the SAGA complex, e(y)2, Sgf11, and not/nonstop form an additional subcomplex of SAGA called the DUB module (deubiquitination module). Component of the THO complex, composed of at least e(y)2, HPR1, THO2, THOC5, THOC6 and THOC7. Interacts with e(y)1. Interacts with su(Hw) (via zinc fingers). Interacts with xmas-2; required for localization to the nuclear periphery. Interacts with the nuclear pore complex (NPC).

The protein resides in the nucleus. Its subcellular location is the nucleoplasm. It localises to the cytoplasm. Involved in mRNA export coupled transcription activation by association with both the AMEX and the SAGA complexes. The SAGA complex is a multiprotein complex that activates transcription by remodeling chromatin and mediating histone acetylation and deubiquitination. Within the SAGA complex, participates in a subcomplex that specifically deubiquitinates histone H2B. The SAGA complex is recruited to specific gene promoters by activators, where it is required for transcription. Required for nuclear receptor-mediated transactivation. Involved in transcription elongation by recruiting the THO complex onto nascent mRNA. The AMEX complex functions in docking export-competent ribonucleoprotein particles (mRNPs) to the nuclear entrance of the nuclear pore complex (nuclear basket). AMEX participates in mRNA export and accurate chromatin positioning in the nucleus by tethering genes to the nuclear periphery. This chain is Enhancer of yellow 2 transcription factor, found in Drosophila grimshawi (Hawaiian fruit fly).